The primary structure comprises 192 residues: Imidazoleglycerol-phosphate dehydratase (192 aa).

Belongs to the imidazoleglycerol-phosphate dehydratase family.

It is found in the cytoplasm. It carries out the reaction D-erythro-1-(imidazol-4-yl)glycerol 3-phosphate = 3-(imidazol-4-yl)-2-oxopropyl phosphate + H2O. It functions in the pathway amino-acid biosynthesis; L-histidine biosynthesis; L-histidine from 5-phospho-alpha-D-ribose 1-diphosphate: step 6/9. In Staphylococcus saprophyticus subsp. saprophyticus (strain ATCC 15305 / DSM 20229 / NCIMB 8711 / NCTC 7292 / S-41), this protein is Imidazoleglycerol-phosphate dehydratase.